A 115-amino-acid chain; its full sequence is Parathyroid hormone (115 aa).

The signal sequence occupies residues Met-1 to Gly-25. Positions Lys-26–Arg-31 are excised as a propeptide. The interval Arg-51–Gly-69 is important for receptor binding. Residues Arg-75–Leu-98 are disordered.

Belongs to the parathyroid hormone family. In terms of assembly, interacts with PTH1R (via N-terminal extracellular domain).

It localises to the secreted. Functionally, parathyroid hormone elevates calcium level by dissolving the salts in bone and preventing their renal excretion. Acts by binding to its receptor, PTH1R, activating G protein-coupled receptor signaling. Stimulates [1-14C]-2-deoxy-D-glucose (2DG) transport and glycogen synthesis in osteoblastic cells. The polypeptide is Parathyroid hormone (PTH) (Sus scrofa (Pig)).